The primary structure comprises 145 residues: Glutaconyl-CoA decarboxylase subunit gamma (145 aa).

Positions 52–82 (APAPAAAPAAAPAPAAKPAAAAPAGSVTVSA) are disordered. Low complexity predominate over residues 57–75 (AAPAAAPAPAAKPAAAAPA). In terms of domain architecture, Biotinyl-binding spans 77–145 (SVTVSAPMPG…VATGDVMVIL (69 aa)). At Lys-112 the chain carries N6-biotinyllysine.

As to quaternary structure, heterooctamer consisting of two alpha, two beta, two gamma and two delta subunits. It depends on biotin as a cofactor.

The enzyme catalyses (2E)-glutaconyl-CoA + Na(+)(in) + H(+) = (2E)-butenoyl-CoA + Na(+)(out) + CO2. It functions in the pathway amino-acid degradation; L-glutamate degradation via hydroxyglutarate pathway; crotonoyl-CoA from L-glutamate: step 5/5. Functionally, biotin carrier subunit of the primary sodium pump glutaconyl-CoA decarboxylase (GCD). The polypeptide is Glutaconyl-CoA decarboxylase subunit gamma (gcdC) (Acidaminococcus fermentans (strain ATCC 25085 / DSM 20731 / CCUG 9996 / CIP 106432 / VR4)).